The sequence spans 485 residues: MTVETFDPNKVANKTTTLETPVKVLSDNQSSQQGVGSRIGFVSLGCPKNLVDSERILTQLRTEGYDVVPTYNDADLVIVNTCGFIDAAVEESLDTIGEALKENGKVIVTGCLGVKEDEIRELHPNVLAITGPHAYETVVEQVHEHLPKPQHNPFADLIPDHGVKLTPRHYAYLKISEGCNHRCTFCIIPSMRGDLVSRPVGNVLDEAKRLKEAGVKELLVISQDTSAYGVDVKHRTGFWNGMPVKTHMQQLCEQLGEMGIWVRLHYVYPYPHVDDLIPLMNDGKILPYLDIPFQHANKRILRLMKRPGSAERVLERVKKWREQCPSLVIRSTFIVGFPGETEEEFEELLDFLREAQLDRVGAFAYSPVEGARANDLPDPVPEDIKQERLARFMEVQGEISAARLKARIGNEYQVVIDSVDAEGAVGRTYADAPEVDGLVHLNGVYDVKPGDRVWAEVIHANEHDVWAVLSEDQDDEEAHATEGAE.

Positions 37–147 (SRIGFVSLGC…VVEQVHEHLP (111 aa)) constitute an MTTase N-terminal domain. Cys46, Cys82, Cys111, Cys179, Cys183, and Cys186 together coordinate [4Fe-4S] cluster. A Radical SAM core domain is found at 165–402 (LTPRHYAYLK…MEVQGEISAA (238 aa)). The 67-residue stretch at 405–471 (KARIGNEYQV…EHDVWAVLSE (67 aa)) folds into the TRAM domain.

This sequence belongs to the methylthiotransferase family. RimO subfamily. The cofactor is [4Fe-4S] cluster.

It localises to the cytoplasm. It catalyses the reaction L-aspartate(89)-[ribosomal protein uS12]-hydrogen + (sulfur carrier)-SH + AH2 + 2 S-adenosyl-L-methionine = 3-methylsulfanyl-L-aspartate(89)-[ribosomal protein uS12]-hydrogen + (sulfur carrier)-H + 5'-deoxyadenosine + L-methionine + A + S-adenosyl-L-homocysteine + 2 H(+). Functionally, catalyzes the methylthiolation of an aspartic acid residue of ribosomal protein uS12. The protein is Ribosomal protein uS12 methylthiotransferase RimO of Alteromonas mediterranea (strain DSM 17117 / CIP 110805 / LMG 28347 / Deep ecotype).